The following is a 144-amino-acid chain: 3-hydroxyacyl-[acyl-carrier-protein] dehydratase FabZ (144 aa).

Residue His-52 is part of the active site.

It belongs to the thioester dehydratase family. FabZ subfamily.

The protein localises to the cytoplasm. It catalyses the reaction a (3R)-hydroxyacyl-[ACP] = a (2E)-enoyl-[ACP] + H2O. Its function is as follows. Involved in unsaturated fatty acids biosynthesis. Catalyzes the dehydration of short chain beta-hydroxyacyl-ACPs and long chain saturated and unsaturated beta-hydroxyacyl-ACPs. This is 3-hydroxyacyl-[acyl-carrier-protein] dehydratase FabZ from Syntrophomonas wolfei subsp. wolfei (strain DSM 2245B / Goettingen).